The primary structure comprises 425 residues: Phosphoribosylamine--glycine ligase (425 aa).

Residues 110–317 (KEFMKRHGIP…LFDALLASVE (208 aa)) form the ATP-grasp domain. Residue 137-198 (ETCPTFPQVI…EAFLSGQEAS (62 aa)) participates in ATP binding. Glu-287 and Asn-289 together coordinate Mg(2+).

This sequence belongs to the GARS family. Requires Mg(2+) as cofactor. The cofactor is Mn(2+).

The enzyme catalyses 5-phospho-beta-D-ribosylamine + glycine + ATP = N(1)-(5-phospho-beta-D-ribosyl)glycinamide + ADP + phosphate + H(+). It participates in purine metabolism; IMP biosynthesis via de novo pathway; N(1)-(5-phospho-D-ribosyl)glycinamide from 5-phospho-alpha-D-ribose 1-diphosphate: step 2/2. The sequence is that of Phosphoribosylamine--glycine ligase from Chlorobaculum tepidum (strain ATCC 49652 / DSM 12025 / NBRC 103806 / TLS) (Chlorobium tepidum).